The following is a 131-amino-acid chain: Bacteriohemerythrin (131 aa).

Fe cation contacts are provided by His22, His58, Glu62, His77, His81, His117, and Asp122.

The protein belongs to the hemerythrin family. As to quaternary structure, monomer.

In terms of biological role, oxygen-binding protein. May be involved in a storage mechanism or for delivery to oxygen-requiring enzymes. The oxygen-binding site contains two iron atoms. This chain is Bacteriohemerythrin, found in Methylococcus capsulatus (strain ATCC 33009 / NCIMB 11132 / Bath).